The sequence spans 270 residues: Replication protein A 32 kDa subunit (270 aa).

M1 bears the N-acetylmethionine mark. S4 and S8 each carry phosphoserine; by PRKDC. At T21 the chain carries Phosphothreonine; by PRKDC. The disordered stretch occupies residues 21–40 (TQSPGGFGSPAPSQAEKKSR). A Phosphoserine; by CDK2 modification is found at S23. Phosphoserine; by CDK1 is present on S29. Phosphoserine; by PRKDC is present on S33. Glycyl lysine isopeptide (Lys-Gly) (interchain with G-Cter in ubiquitin) cross-links involve residues K37 and K38. The segment at residues 74-148 (VTIVGIIRHA…KSLVAFKIMP (75 aa)) is a DNA-binding region (OB). The segment at 187 to 270 (GMSEAGNFGG…DDHFKSTDAE (84 aa)) is interaction with RAD52, TIPIN, UNG and XPA.

Belongs to the replication factor A protein 2 family. In terms of assembly, component of the replication protein A complex (RPA/RP-A), a heterotrimeric complex composed of RPA1, RPA2 and RPA3. Interacts with PRPF19; the PRP19-CDC5L complex is recruited to the sites of DNA repair where it ubiquitinates the replication protein A complex (RPA). Interacts with SERTAD3. Interacts with TIPIN. Interacts with TIMELESS. Interacts with PPP4R2; the interaction is direct, DNA damage-dependent and mediates the recruitment of the PP4 catalytic subunit PPP4C. Interacts (hyperphosphorylated) with RAD51. Interacts with SMARCAL1; the interaction is direct and mediates the recruitment to the RPA complex of SMARCAL1. Interacts with RAD52 and XPA; those interactions are direct and associate RAD52 and XPA to the RPA complex. Interacts with FBH1. Interacts with ETAA1; the interaction is direct and promotes ETAA1 recruitment at stalled replication forks. Interacts with DDI2. Interacts (in unphosphorylated form via N-terminus) with EIF4EBP3; the interaction enhances EIF4EBP3-mediated inhibition of EIF4E-mediated mRNA nuclear export. Post-translationally, differentially phosphorylated throughout the cell cycle, becoming phosphorylated at the G1-S transition and dephosphorylated in late mitosis. Mainly phosphorylated at Ser-23 and Ser-29, by cyclin A-CDK2 and cyclin B-CDK1, respectively during DNA replication and mitosis. Dephosphorylation may require the serine/threonine-protein phosphatase 4. Phosphorylation at Ser-23 and Ser-29 is a prerequisite for further phosphorylation. Becomes hyperphosphorylated on additional residues including Ser-4, Ser-8, Thr-21 and Ser-33 in response to DNA damage. Hyperphosphorylation is mediated by ATM, ATR and PRKDC. Primarily recruited to DNA repair nuclear foci as a hypophosphorylated form it undergoes subsequent hyperphosphorylation, catalyzed by ATR. Hyperphosphorylation is required for RAD51 recruitment to chromatin and efficient DNA repair. Phosphorylation at Thr-21 depends upon RFWD3 presence. In terms of processing, DNA damage-induced 'Lys-63'-linked polyubiquitination by PRPF19 mediates ATRIP recruitment to the RPA complex at sites of DNA damage and activation of ATR. Ubiquitinated by RFWD3 at stalled replication forks in response to DNA damage: ubiquitination by RFWD3 does not lead to degradation by the proteasome and promotes removal of the RPA complex from stalled replication forks, promoting homologous recombination.

The protein resides in the nucleus. It is found in the PML body. Functionally, as part of the heterotrimeric replication protein A complex (RPA/RP-A), binds and stabilizes single-stranded DNA intermediates, that form during DNA replication or upon DNA stress. It prevents their reannealing and in parallel, recruits and activates different proteins and complexes involved in DNA metabolism. Thereby, it plays an essential role both in DNA replication and the cellular response to DNA damage. In the cellular response to DNA damage, the RPA complex controls DNA repair and DNA damage checkpoint activation. Through recruitment of ATRIP activates the ATR kinase a master regulator of the DNA damage response. It is required for the recruitment of the DNA double-strand break repair factors RAD51 and RAD52 to chromatin in response to DNA damage. Also recruits to sites of DNA damage proteins like XPA and XPG that are involved in nucleotide excision repair and is required for this mechanism of DNA repair. Also plays a role in base excision repair (BER) probably through interaction with UNG. Also recruits SMARCAL1/HARP, which is involved in replication fork restart, to sites of DNA damage. May also play a role in telomere maintenance. The chain is Replication protein A 32 kDa subunit (RPA2) from Pongo abelii (Sumatran orangutan).